Consider the following 563-residue polypeptide: E3 ubiquitin-protein ligase IpaH2.5 (563 aa).

The interval 1–270 is interaction with target proteins; sequence MIKSTNIQVI…PDYSGPQIFF (270 aa). LRR repeat units lie at residues 69-90, 91-115, 117-130, 131-150, 151-170, 171-195, 197-209, and 210-233; these read LQNQ…PDLP, PQIT…MLKV, HAQF…PALP, ETLE…PFLP, ENLT…PLLP, PELK…KLEG, ALAN…LPEL, and PFSM…VLRL. A linker region spans residues 271-281; that stretch reads SMGNSATISAP. The interval 282 to 563 is E3 ubiquitin-protein ligase catalytic domain; that stretch reads EHSLADAVTA…YRQLTDEVLA (282 aa). Residues 284 to 563 form the NEL domain; sequence SLADAVTAWF…YRQLTDEVLA (280 aa). The active-site Glycyl thioester intermediate is Cys368.

Belongs to the LRR-containing bacterial E3 ligase family. Interacts with human RBCK1/HOIL-1 and RNF31/HOIP components of the LUBAC complex. In terms of processing, ubiquitinated in the presence of host E1 ubiquitin-activating enzyme, E2 ubiquitin-conjugating enzyme and ubiquitin.

It is found in the secreted. It localises to the host cytoplasm. The enzyme catalyses S-ubiquitinyl-[E2 ubiquitin-conjugating enzyme]-L-cysteine + [acceptor protein]-L-lysine = [E2 ubiquitin-conjugating enzyme]-L-cysteine + N(6)-ubiquitinyl-[acceptor protein]-L-lysine.. Its pathway is protein modification; protein ubiquitination. Exists in an autoinhibited state in the absence of substrate protein, probably due to interactions of the leucine-rich repeat domain with the catalytic domain. Is activated upon binding to a substrate protein. In terms of biological role, E3 ubiquitin-protein ligase effector that inhibits host cell innate immunity during bacterial infection by catalyzing 'Lys-48'-linked polyubiquitination and subsequent degradation of host RNF31/HOIP. Host RNF31/HOIP is the catalytic component of the LUBAC complex, which conjugates linear ('Met-1'-linked) polyubiquitin chains at the surface of bacteria invading the host cytosol to form the ubiquitin coat surrounding bacteria. The bacterial ubiquitin coat acts as an 'eat-me' signal for xenophagy and promotes NF-kappa-B activation. This is E3 ubiquitin-protein ligase IpaH2.5 from Shigella flexneri.